Here is a 343-residue protein sequence, read N- to C-terminus: Nuclease EXOG, mitochondrial (343 aa).

His-121 functions as the Proton acceptor in the catalytic mechanism. Asn-152 lines the a divalent metal cation pocket.

It belongs to the DNA/RNA non-specific endonuclease family. Homodimer. The cofactor is a divalent metal cation.

The protein resides in the mitochondrion inner membrane. Functionally, endo/exonuclease with nicking activity towards supercoiled DNA, a preference for single-stranded DNA and 5'-3' exonuclease activity. The protein is Nuclease EXOG, mitochondrial (exog) of Danio rerio (Zebrafish).